Reading from the N-terminus, the 104-residue chain is Large ribosomal subunit protein bL21 (104 aa).

Belongs to the bacterial ribosomal protein bL21 family. As to quaternary structure, part of the 50S ribosomal subunit. Contacts protein L20.

This protein binds to 23S rRNA in the presence of protein L20. The chain is Large ribosomal subunit protein bL21 from Helicobacter pylori (strain J99 / ATCC 700824) (Campylobacter pylori J99).